The primary structure comprises 302 residues: MALRLDGKQLAAELEQRLQAEIAAGLVQAGRPPGLAVLRIGDDPASGVYVANKQKACGRIGVASHLTHLPETVSVSKVLATIQALNIDERVDGILLQLPLPKGLDEGPLLAAIDPEKDADGLHTLNLGRLLKGEPGPRSCTPAGVMALLARHQISLERKRAVVIGRSILVGQPMALMLQAANATVSVAHSHTGDLASLTQQADVLVVAAGRARMIGAEHVKPGAVVVDVGIHRLPLDPELGTQAKARLCGDVRTQEVEPLASALTPVPGGVGPMTVTMLLVNTVARWQQHCGLPFGLRDLLV.

NADP(+) contacts are provided by residues 165 to 167 (GRS), Ser-190, and Ile-231.

The protein belongs to the tetrahydrofolate dehydrogenase/cyclohydrolase family. As to quaternary structure, homodimer.

The catalysed reaction is (6R)-5,10-methylene-5,6,7,8-tetrahydrofolate + NADP(+) = (6R)-5,10-methenyltetrahydrofolate + NADPH. The enzyme catalyses (6R)-5,10-methenyltetrahydrofolate + H2O = (6R)-10-formyltetrahydrofolate + H(+). Its pathway is one-carbon metabolism; tetrahydrofolate interconversion. Catalyzes the oxidation of 5,10-methylenetetrahydrofolate to 5,10-methenyltetrahydrofolate and then the hydrolysis of 5,10-methenyltetrahydrofolate to 10-formyltetrahydrofolate. The sequence is that of Bifunctional protein FolD from Prochlorococcus marinus (strain MIT 9313).